The sequence spans 129 residues: D-ribose pyranase (129 aa).

The active-site Proton donor is histidine 20. Substrate is bound by residues aspartate 28, histidine 96, and 118 to 120 (YAN).

The protein belongs to the RbsD / FucU family. RbsD subfamily. In terms of assembly, homodecamer.

Its subcellular location is the cytoplasm. The catalysed reaction is beta-D-ribopyranose = beta-D-ribofuranose. It participates in carbohydrate metabolism; D-ribose degradation; D-ribose 5-phosphate from beta-D-ribopyranose: step 1/2. Functionally, catalyzes the interconversion of beta-pyran and beta-furan forms of D-ribose. This chain is D-ribose pyranase, found in Staphylococcus haemolyticus (strain JCSC1435).